Here is a 377-residue protein sequence, read N- to C-terminus: Succinyl-diaminopimelate desuccinylase (377 aa).

His67 serves as a coordination point for Zn(2+). Asp69 is a catalytic residue. Residue Asp100 participates in Zn(2+) binding. Glu134 acts as the Proton acceptor in catalysis. Zn(2+) contacts are provided by Glu135, Glu163, and His349.

Belongs to the peptidase M20A family. DapE subfamily. As to quaternary structure, homodimer. Requires Zn(2+) as cofactor. It depends on Co(2+) as a cofactor.

The catalysed reaction is N-succinyl-(2S,6S)-2,6-diaminopimelate + H2O = (2S,6S)-2,6-diaminopimelate + succinate. Its pathway is amino-acid biosynthesis; L-lysine biosynthesis via DAP pathway; LL-2,6-diaminopimelate from (S)-tetrahydrodipicolinate (succinylase route): step 3/3. In terms of biological role, catalyzes the hydrolysis of N-succinyl-L,L-diaminopimelic acid (SDAP), forming succinate and LL-2,6-diaminopimelate (DAP), an intermediate involved in the bacterial biosynthesis of lysine and meso-diaminopimelic acid, an essential component of bacterial cell walls. This chain is Succinyl-diaminopimelate desuccinylase, found in Dechloromonas aromatica (strain RCB).